Reading from the N-terminus, the 332-residue chain is Ribosomal RNA small subunit methyltransferase H (332 aa).

S-adenosyl-L-methionine-binding positions include 39-41, Asp56, Phe83, Asp100, and Gln107; that span reads GGY.

It belongs to the methyltransferase superfamily. RsmH family.

The protein resides in the cytoplasm. It carries out the reaction cytidine(1402) in 16S rRNA + S-adenosyl-L-methionine = N(4)-methylcytidine(1402) in 16S rRNA + S-adenosyl-L-homocysteine + H(+). In terms of biological role, specifically methylates the N4 position of cytidine in position 1402 (C1402) of 16S rRNA. The sequence is that of Ribosomal RNA small subunit methyltransferase H from Bartonella tribocorum (strain CIP 105476 / IBS 506).